Reading from the N-terminus, the 257-residue chain is Tryptophan synthase alpha chain (257 aa).

Catalysis depends on proton acceptor residues E51 and D62.

Belongs to the TrpA family. As to quaternary structure, tetramer of two alpha and two beta chains.

The catalysed reaction is (1S,2R)-1-C-(indol-3-yl)glycerol 3-phosphate + L-serine = D-glyceraldehyde 3-phosphate + L-tryptophan + H2O. It participates in amino-acid biosynthesis; L-tryptophan biosynthesis; L-tryptophan from chorismate: step 5/5. Its function is as follows. The alpha subunit is responsible for the aldol cleavage of indoleglycerol phosphate to indole and glyceraldehyde 3-phosphate. This chain is Tryptophan synthase alpha chain, found in Nitratidesulfovibrio vulgaris (strain ATCC 29579 / DSM 644 / CCUG 34227 / NCIMB 8303 / VKM B-1760 / Hildenborough) (Desulfovibrio vulgaris).